The following is a 411-amino-acid chain: Imidazolonepropionase (411 aa).

His-75 and His-77 together coordinate Fe(3+). Residues His-75 and His-77 each coordinate Zn(2+). Residues Arg-84, Tyr-147, and His-180 each coordinate 4-imidazolone-5-propanoate. Tyr-147 contributes to the N-formimidoyl-L-glutamate binding site. His-245 is a binding site for Fe(3+). Residue His-245 participates in Zn(2+) binding. Gln-248 is a 4-imidazolone-5-propanoate binding site. Asp-320 lines the Fe(3+) pocket. Residue Asp-320 participates in Zn(2+) binding. Residues Asn-322 and Gly-324 each contribute to the N-formimidoyl-L-glutamate site. 4-imidazolone-5-propanoate is bound at residue Thr-325.

It belongs to the metallo-dependent hydrolases superfamily. HutI family. It depends on Zn(2+) as a cofactor. The cofactor is Fe(3+).

The protein resides in the cytoplasm. The catalysed reaction is 4-imidazolone-5-propanoate + H2O = N-formimidoyl-L-glutamate. The protein operates within amino-acid degradation; L-histidine degradation into L-glutamate; N-formimidoyl-L-glutamate from L-histidine: step 3/3. In terms of biological role, catalyzes the hydrolytic cleavage of the carbon-nitrogen bond in imidazolone-5-propanoate to yield N-formimidoyl-L-glutamate. It is the third step in the universal histidine degradation pathway. The chain is Imidazolonepropionase from Aeromonas salmonicida (strain A449).